Consider the following 219-residue polypeptide: Thiamine-phosphate synthase (219 aa).

Residues 48–52 (QLREK) and Asn-80 each bind 4-amino-2-methyl-5-(diphosphooxymethyl)pyrimidine. 2 residues coordinate Mg(2+): Asp-81 and Asp-100. Residue Ser-119 participates in 4-amino-2-methyl-5-(diphosphooxymethyl)pyrimidine binding. A 2-[(2R,5Z)-2-carboxy-4-methylthiazol-5(2H)-ylidene]ethyl phosphate-binding site is contributed by 145-147 (TPT). Lys-148 contributes to the 4-amino-2-methyl-5-(diphosphooxymethyl)pyrimidine binding site. 2-[(2R,5Z)-2-carboxy-4-methylthiazol-5(2H)-ylidene]ethyl phosphate contacts are provided by residues Gly-176 and 196-197 (VS).

Belongs to the thiamine-phosphate synthase family. It depends on Mg(2+) as a cofactor.

The enzyme catalyses 2-[(2R,5Z)-2-carboxy-4-methylthiazol-5(2H)-ylidene]ethyl phosphate + 4-amino-2-methyl-5-(diphosphooxymethyl)pyrimidine + 2 H(+) = thiamine phosphate + CO2 + diphosphate. It catalyses the reaction 2-(2-carboxy-4-methylthiazol-5-yl)ethyl phosphate + 4-amino-2-methyl-5-(diphosphooxymethyl)pyrimidine + 2 H(+) = thiamine phosphate + CO2 + diphosphate. It carries out the reaction 4-methyl-5-(2-phosphooxyethyl)-thiazole + 4-amino-2-methyl-5-(diphosphooxymethyl)pyrimidine + H(+) = thiamine phosphate + diphosphate. The protein operates within cofactor biosynthesis; thiamine diphosphate biosynthesis; thiamine phosphate from 4-amino-2-methyl-5-diphosphomethylpyrimidine and 4-methyl-5-(2-phosphoethyl)-thiazole: step 1/1. In terms of biological role, condenses 4-methyl-5-(beta-hydroxyethyl)thiazole monophosphate (THZ-P) and 2-methyl-4-amino-5-hydroxymethyl pyrimidine pyrophosphate (HMP-PP) to form thiamine monophosphate (TMP). The chain is Thiamine-phosphate synthase from Albidiferax ferrireducens (strain ATCC BAA-621 / DSM 15236 / T118) (Rhodoferax ferrireducens).